Reading from the N-terminus, the 544-residue chain is Methionine--tRNA ligase 1 (544 aa).

The 'HIGH' region signature appears at 10–20 (PYANGSLHLGH). Zn(2+)-binding residues include C141, C144, C153, and C156. The 'KMSKS' region motif lies at 329–333 (KLSTS). T332 contributes to the ATP binding site.

This sequence belongs to the class-I aminoacyl-tRNA synthetase family. MetG type 1 subfamily. Monomer. Zn(2+) is required as a cofactor.

The protein localises to the cytoplasm. It carries out the reaction tRNA(Met) + L-methionine + ATP = L-methionyl-tRNA(Met) + AMP + diphosphate. Its function is as follows. Is required not only for elongation of protein synthesis but also for the initiation of all mRNA translation through initiator tRNA(fMet) aminoacylation. The protein is Methionine--tRNA ligase 1 of Bacillus cereus (strain ATCC 10987 / NRS 248).